A 218-amino-acid chain; its full sequence is Small ribosomal subunit protein uS3c (218 aa).

The KH type-2 domain occupies 47 to 120 (VRTHIKSSSN…KLHIAIEKVA (74 aa)).

It belongs to the universal ribosomal protein uS3 family. Part of the 30S ribosomal subunit.

Its subcellular location is the plastid. The protein resides in the chloroplast. The sequence is that of Small ribosomal subunit protein uS3c (rps3) from Picea abies (Norway spruce).